The primary structure comprises 386 residues: 2-deoxy-scyllo-inosose synthase (386 aa).

Residues aspartate 42, 73 to 76, 105 to 109, 129 to 130, 140 to 142, and 151 to 152 contribute to the NAD(+) site; these read EEHK, GVTGN, TT, SLK, and KN. The active site involves lysine 142. Residue glutamate 184 participates in Co(2+) binding. The active site involves glutamate 244. Residues histidine 247 and histidine 263 each coordinate Co(2+).

This sequence belongs to the sugar phosphate cyclases superfamily. DOI synthase family. The cofactor is NAD(+). It depends on Co(2+) as a cofactor.

It catalyses the reaction D-glucose 6-phosphate = 2-deoxy-L-scyllo-inosose + phosphate. It functions in the pathway metabolic intermediate biosynthesis; 2-deoxystreptamine biosynthesis; 2-deoxystreptamine from D-glucose 6-phosphate: step 1/4. Its pathway is antibiotic biosynthesis; tobramycin biosynthesis. Catalyzes the intramolecular carbocycle formation from D-glucose-6-phosphate to 2-deoxy-scyllo-inosose (DOI). This Streptoalloteichus tenebrarius (strain ATCC 17920 / DSM 40477 / JCM 4838 / CBS 697.72 / NBRC 16177 / NCIMB 11028 / NRRL B-12390 / A12253. 1 / ISP 5477) (Streptomyces tenebrarius) protein is 2-deoxy-scyllo-inosose synthase (tbmA).